A 247-amino-acid chain; its full sequence is Small ribosomal subunit protein uS3 (247 aa).

Residues 51-119 (VAKRDKRPAG…ELHLNIVEIR (69 aa)) form the KH type-2 domain. The span at 224–233 (PSAHDRRQQE) shows a compositional bias: basic and acidic residues. The tract at residues 224 to 247 (PSAHDRRQQELQESGGASRPRRDR) is disordered.

It belongs to the universal ribosomal protein uS3 family. In terms of assembly, part of the 30S ribosomal subunit. Forms a tight complex with proteins S10 and S14.

Functionally, binds the lower part of the 30S subunit head. Binds mRNA in the 70S ribosome, positioning it for translation. The chain is Small ribosomal subunit protein uS3 from Jannaschia sp. (strain CCS1).